The following is a 295-amino-acid chain: MSLRRRGIVVSFHSNMVTVEDEETGERILCKLRGKFRLQNLKIYVGDRVEYTPDETGSGVIENVLHRKNLLTKPHVANVDQVILVVTVKMPETSTYIIDKFLVLAEKNELETVMVFNKMDLYDEADLKKVRELEEIYSELYPIVKTSAKTGMGIEELKEYLKGKISTMAGLSGVGKSSLLNAINPGLKLRVSEVSEKLQRGRHTTTTAQLLKFDFGGYVVDTPGFANLEISDIEPEELKNYFKEFGDKQCFFSDCNHVDEPDCGVKEAVENGEIAESRYENYVKMFYELLGRRKK.

One can recognise a CP-type G domain in the interval 68–228 (KNLLTKPHVA…VVDTPGFANL (161 aa)). GTP contacts are provided by residues 117 to 120 (NKMD) and 170 to 178 (GLSGVGKSS). Positions 250, 255, 257, and 263 each coordinate Zn(2+).

Belongs to the TRAFAC class YlqF/YawG GTPase family. RsgA subfamily. As to quaternary structure, monomer. Associates with 30S ribosomal subunit, binds 16S rRNA. Requires Zn(2+) as cofactor.

Its subcellular location is the cytoplasm. Functionally, one of several proteins that assist in the late maturation steps of the functional core of the 30S ribosomal subunit. Helps release RbfA from mature subunits. May play a role in the assembly of ribosomal proteins into the subunit. Circularly permuted GTPase that catalyzes slow GTP hydrolysis, GTPase activity is stimulated by the 30S ribosomal subunit. The polypeptide is Small ribosomal subunit biogenesis GTPase RsgA (Thermotoga petrophila (strain ATCC BAA-488 / DSM 13995 / JCM 10881 / RKU-1)).